The primary structure comprises 340 residues: GTPase Obg (340 aa).

The Obg domain occupies 1–159 (MGFIDEVKLC…KHVLLKLKVL (159 aa)). Positions 160–329 (SDVGIIGMPN…LSEKLKKSNS (170 aa)) constitute an OBG-type G domain. Residues 166 to 173 (GMPNAGKS), 191 to 195 (FTTVR), 212 to 215 (DIPG), 279 to 282 (NKCD), and 310 to 312 (NGD) each bind GTP. S173 and T193 together coordinate Mg(2+).

Belongs to the TRAFAC class OBG-HflX-like GTPase superfamily. OBG GTPase family. In terms of assembly, monomer. It depends on Mg(2+) as a cofactor.

It localises to the cytoplasm. Its function is as follows. An essential GTPase which binds GTP, GDP and possibly (p)ppGpp with moderate affinity, with high nucleotide exchange rates and a fairly low GTP hydrolysis rate. Plays a role in control of the cell cycle, stress response, ribosome biogenesis and in those bacteria that undergo differentiation, in morphogenesis control. The polypeptide is GTPase Obg (Wolbachia sp. subsp. Drosophila simulans (strain wRi)).